A 372-amino-acid chain; its full sequence is Chaperone protein DnaJ (372 aa).

Residues Asn3–Gly68 form the J domain. The CR-type zinc finger occupies Gly130 to Arg212. The Zn(2+) site is built by Cys143, Cys146, Cys160, Cys163, Cys186, Cys189, Cys200, and Cys203. 4 CXXCXGXG motif repeats span residues Cys143–Gly150, Cys160–Gly167, Cys186–Gly193, and Cys200–Gly207.

It belongs to the DnaJ family. In terms of assembly, homodimer. Zn(2+) serves as cofactor.

The protein resides in the cytoplasm. Functionally, participates actively in the response to hyperosmotic and heat shock by preventing the aggregation of stress-denatured proteins and by disaggregating proteins, also in an autonomous, DnaK-independent fashion. Unfolded proteins bind initially to DnaJ; upon interaction with the DnaJ-bound protein, DnaK hydrolyzes its bound ATP, resulting in the formation of a stable complex. GrpE releases ADP from DnaK; ATP binding to DnaK triggers the release of the substrate protein, thus completing the reaction cycle. Several rounds of ATP-dependent interactions between DnaJ, DnaK and GrpE are required for fully efficient folding. Also involved, together with DnaK and GrpE, in the DNA replication of plasmids through activation of initiation proteins. This is Chaperone protein DnaJ from Finegoldia magna (strain ATCC 29328 / DSM 20472 / WAL 2508) (Peptostreptococcus magnus).